A 362-amino-acid polypeptide reads, in one-letter code: Protein RecA (362 aa).

77-84 serves as a coordination point for ATP; that stretch reads GPESSGKT.

Belongs to the RecA family.

It is found in the cytoplasm. In terms of biological role, can catalyze the hydrolysis of ATP in the presence of single-stranded DNA, the ATP-dependent uptake of single-stranded DNA by duplex DNA, and the ATP-dependent hybridization of homologous single-stranded DNAs. It interacts with LexA causing its activation and leading to its autocatalytic cleavage. The polypeptide is Protein RecA (Allorhizobium ampelinum (strain ATCC BAA-846 / DSM 112012 / S4) (Agrobacterium vitis (strain S4))).